We begin with the raw amino-acid sequence, 250 residues long: MSDLSGKTIIVTGGGSGIGRATVELLVASGANVAVADINDEAGEAVVAASGGKAAYFRCDIAQEEDVKALVAQTLAAFGGLDGAFNNAAIPQAGLPLAEVSLERFRQSMDINVTGTFLCMKYQILAMIERGTKGSIVNTASAAGVVGVPMHGEYVGAKHAVVGLTRVAAADYGKHGIRVNALVPGAVRTPMLQRAMDNDAGLEPYLNSIHPIGRFSEPHEQAQAAVWLLSDAASFVTGSCLAADGGFTAI.

9-34 (IIVTGGGSGIGRATVELLVASGANVA) provides a ligand contact to NAD(+). Substrate is bound at residue Ser141. The active-site Proton acceptor is the Tyr154.

Belongs to the short-chain dehydrogenases/reductases (SDR) family.

The catalysed reaction is 2,5-dichlorocyclohexa-2,5-dien-1,4-diol + NAD(+) = 2,5-dichlorohydroquinone + NADH + H(+). It functions in the pathway xenobiotic degradation; gamma-hexachlorocyclohexane degradation. In terms of biological role, catalyzes the dehydrogenation of 2,5-dichloro-2,5-cyclohexadiene-1,4-diol (2,5-DDOL) to 2,5-dichlorohydroquinone (2,5-DCHQ), a step in the degradation of gamma-hexachlorocyclohexane (gamma-HCH or lindane). Has an essential role in this assimilation pathway that allows S.japonicum UT26 to grow on gamma-HCH as the sole source of carbon and energy. This chain is 2,5-dichloro-2,5-cyclohexadiene-1,4-diol dehydrogenase, found in Sphingobium indicum (strain DSM 16413 / CCM 7287 / MTCC 6362 / UT26 / NBRC 101211 / UT26S) (Sphingobium japonicum).